A 336-amino-acid chain; its full sequence is D-aspartate oxidase (336 aa).

Residues E34, K35, T41, S42, G304, V308, and S309 each contribute to the FAD site. Residues 334 to 336 (SKL) carry the Microbody targeting signal motif.

This sequence belongs to the DAMOX/DASOX family. In terms of assembly, monomer. FAD is required as a cofactor.

Its subcellular location is the peroxisome matrix. The catalysed reaction is D-aspartate + O2 + H2O = oxaloacetate + H2O2 + NH4(+). It catalyses the reaction D-glutamate + O2 + H2O = H2O2 + 2-oxoglutarate + NH4(+). Functionally, selectively catalyzes the oxidative deamination of acidic amino acids. Suppresses the level of D-aspartate in the brain, an amino acid that can act as an agonist for glutamate receptors. Protects the organism from the toxicity of D-amino acids. May also function in the intestine. This is D-aspartate oxidase from Octopus vulgaris (Common octopus).